Here is a 253-residue protein sequence, read N- to C-terminus: Imidazole glycerol phosphate synthase subunit HisF (253 aa).

Residues Asp-11 and Asp-130 contribute to the active site.

It belongs to the HisA/HisF family. Heterodimer of HisH and HisF.

The protein resides in the cytoplasm. It carries out the reaction 5-[(5-phospho-1-deoxy-D-ribulos-1-ylimino)methylamino]-1-(5-phospho-beta-D-ribosyl)imidazole-4-carboxamide + L-glutamine = D-erythro-1-(imidazol-4-yl)glycerol 3-phosphate + 5-amino-1-(5-phospho-beta-D-ribosyl)imidazole-4-carboxamide + L-glutamate + H(+). The protein operates within amino-acid biosynthesis; L-histidine biosynthesis; L-histidine from 5-phospho-alpha-D-ribose 1-diphosphate: step 5/9. IGPS catalyzes the conversion of PRFAR and glutamine to IGP, AICAR and glutamate. The HisF subunit catalyzes the cyclization activity that produces IGP and AICAR from PRFAR using the ammonia provided by the HisH subunit. This Thermotoga sp. (strain RQ2) protein is Imidazole glycerol phosphate synthase subunit HisF.